The following is a 364-amino-acid chain: mRNA decay activator protein ZFP36L2-B (364 aa).

Positions 102-111 are enriched in basic and acidic residues; the sequence is SFSENGERSQ. The interval 102 to 129 is disordered; sequence SFSENGERSQHLLHLQQQQQQQKAGAQV. The span at 113–123 shows a compositional bias: low complexity; it reads LLHLQQQQQQQ. Positions 133–138 match the RNA-binding motif; it reads RYKTEL. C3H1-type zinc fingers lie at residues 133–161 and 171–199; these read RYKTELCRPFEENGACKYGEKCQFAHGFH and KYKTELCRTFHTIGFCPYGPRCHFIHNAE. The segment at 150–191 is RNA-binding; the sequence is YGEKCQFAHGFHELRSLTRHPKYKTELCRTFHTIGFCPYGPR. The disordered stretch occupies residues 308–350; sequence SESPVFDAPPSPPDSLSDRDSYLSGSLSSGSLSGSDSPTLDSN. Residues 329–348 are compositionally biased toward low complexity; that stretch reads YLSGSLSSGSLSGSDSPTLD.

In terms of processing, phosphorylated. Remains unlocalized in the egg and early embryo. From stage 21 (late neurula), expressed around the pronephros in the anterior crests, pharyngeal arch, hindbrain, mesodermal tissues around the pronephros and tail-bud. This expression pattern is maintained up to the tadpole stage.

Its subcellular location is the nucleus. It is found in the cytoplasm. In terms of biological role, zinc-finger RNA-binding protein that destabilizes several cytoplasmic AU-rich element (ARE)-containing mRNA transcripts by promoting their poly(A) tail removal or deadenylation, and hence provide a mechanism for attenuating protein synthesis. Acts as a 3'-untranslated region (UTR) ARE mRNA-binding adapter protein to communicate signaling events to the mRNA decay machinery. Functions by recruiting the CCR4-NOT deadenylase complex and probably other components of the cytoplasmic RNA decay machinery to the bound ARE-containing mRNAs, and hence promotes ARE-mediated mRNA deadenylation and decay processes. Binds to 3'-UTR ARE of numerous mRNAs. Also induces the degradation of ARE-containing mRNAs even in absence of poly(A) tail. Required for tubulogenesis during pronephros development. In Xenopus laevis (African clawed frog), this protein is mRNA decay activator protein ZFP36L2-B (zfp36l2-B).